The primary structure comprises 553 residues: ATP synthase F(1) complex subunit alpha, mitochondrial (553 aa).

The N-terminal 43 residues, 1–43, are a transit peptide targeting the mitochondrion; the sequence is MLSVRIAAAVARALPRRAGLVSKNALGSSFVGTRNLHASNTRL. Residues Ser53 and Ser65 each carry the phosphoserine modification. Ser76 carries the post-translational modification Phosphoserine; alternate. Residue Ser76 is glycosylated (O-linked (GlcNAc) serine; alternate). At Ser106 the chain carries Phosphoserine. N6-acetyllysine is present on residues Lys123, Lys126, and Lys132. The residue at position 134 (Thr134) is a Phosphothreonine. Residue Lys161 is modified to N6-acetyllysine; alternate. Lys161 carries the N6-succinyllysine; alternate modification. Position 166 is a phosphoserine (Ser166). The residue at position 167 (Lys167) is an N6-acetyllysine; alternate. Lys167 is subject to N6-succinyllysine; alternate. Phosphoserine is present on Ser184. Arg204 carries the omega-N-methylarginine modification. Positions 215, 217, 218, 219, and 220 each coordinate ATP. Thr219 serves as a coordination point for Mg(2+). N6-acetyllysine; alternate is present on residues Lys230 and Lys239. An N6-succinyllysine; alternate mark is found at Lys230 and Lys239. Lys240 is subject to N6-acetyllysine. Lys261 and Lys305 each carry N6-acetyllysine; alternate. 2 positions are modified to N6-succinyllysine; alternate: Lys261 and Lys305. Asp312 is a binding site for Mg(2+). Lys427 is subject to N6-acetyllysine; alternate. An N6-succinyllysine; alternate modification is found at Lys427. Lys434 carries the N6-acetyllysine modification. Residues Gln473 and Gln475 each contribute to the ATP site. 4 positions are modified to N6-acetyllysine; alternate: Lys498, Lys506, Lys531, and Lys539. Lys498, Lys506, Lys531, and Lys539 each carry N6-succinyllysine; alternate. N6-acetyllysine is present on Lys541.

The protein belongs to the ATPase alpha/beta chains family. In terms of assembly, homotrimer. Component of the ATP synthase complex composed at least of ATP5F1A/subunit alpha, ATP5F1B/subunit beta, ATP5MC1/subunit c (homooctomer), MT-ATP6/subunit a, MT-ATP8/subunit 8, ATP5ME/subunit e, ATP5MF/subunit f, ATP5MG/subunit g, ATP5MK/subunit k, ATP5MJ/subunit j, ATP5F1C/subunit gamma, ATP5F1D/subunit delta, ATP5F1E/subunit epsilon, ATP5PF/subunit F6, ATP5PB/subunit b, ATP5PD/subunit d, ATP5PO/subunit OSCP. ATP synthase complex consists of a soluble F(1) head domain (subunits alpha(3) and beta(3)) - the catalytic core - and a membrane F(0) domain - the membrane proton channel (subunits c, a, 8, e, f, g, k and j). These two domains are linked by a central stalk (subunits gamma, delta, and epsilon) rotating inside the F1 region and a stationary peripheral stalk (subunits F6, b, d, and OSCP). Interacts with ATPAF2. Interacts with HRG; the interaction occurs on the surface of T-cells and alters the cell morphology when associated with concanavalin (in vitro). Interacts with PLG (angiostatin peptide); the interaction inhibits most of the angiogenic properties of angiostatin. Interacts with BLOC1S1. Interacts with BCL2L1 isoform BCL-X(L); the interaction mediates the association of BCL2L1 isoform BCL-X(L) with the mitochondrial membrane F(1)F(0) ATP synthase and enhances neurons metabolic efficiency. Interacts with CLN5 and PPT1. Interacts with S100A1; this interaction increases F1-ATPase activity. Interacts with ABCB7; this interaction allows the regulation of cellular iron homeostasis and cellular reactive oxygen species (ROS) levels in cardiomyocytes. Post-translationally, acetylated on lysine residues. BLOC1S1 is required for acetylation. In terms of tissue distribution, expressed in flagella of epididymal sperm.

It is found in the mitochondrion. It localises to the mitochondrion inner membrane. Its subcellular location is the cell membrane. In terms of biological role, subunit alpha, of the mitochondrial membrane ATP synthase complex (F(1)F(0) ATP synthase or Complex V) that produces ATP from ADP in the presence of a proton gradient across the membrane which is generated by electron transport complexes of the respiratory chain. ATP synthase complex consist of a soluble F(1) head domain - the catalytic core - and a membrane F(1) domain - the membrane proton channel. These two domains are linked by a central stalk rotating inside the F(1) region and a stationary peripheral stalk. During catalysis, ATP synthesis in the catalytic domain of F(1) is coupled via a rotary mechanism of the central stalk subunits to proton translocation. In vivo, can only synthesize ATP although its ATP hydrolase activity can be activated artificially in vitro. With the catalytic subunit beta (ATP5F1B), forms the catalytic core in the F(1) domain. Subunit alpha does not bear the catalytic high-affinity ATP-binding sites. The polypeptide is ATP synthase F(1) complex subunit alpha, mitochondrial (Rattus norvegicus (Rat)).